Reading from the N-terminus, the 180-residue chain is 3-hydroxyanthranilate 3,4-dioxygenase (180 aa).

O2 is bound at residue arginine 46. Fe cation contacts are provided by histidine 50, glutamate 56, and histidine 94. Glutamate 56 provides a ligand contact to substrate. Substrate is bound by residues arginine 98 and glutamate 109. Residues cysteine 124, cysteine 127, cysteine 161, and cysteine 164 each contribute to the Fe cation site.

It belongs to the 3-HAO family. In terms of assembly, homodimer. Fe(2+) serves as cofactor.

It carries out the reaction 3-hydroxyanthranilate + O2 = (2Z,4Z)-2-amino-3-carboxymuconate 6-semialdehyde. Its pathway is cofactor biosynthesis; NAD(+) biosynthesis; quinolinate from L-kynurenine: step 3/3. Catalyzes the oxidative ring opening of 3-hydroxyanthranilate to 2-amino-3-carboxymuconate semialdehyde, which spontaneously cyclizes to quinolinate. The chain is 3-hydroxyanthranilate 3,4-dioxygenase from Ruegeria pomeroyi (strain ATCC 700808 / DSM 15171 / DSS-3) (Silicibacter pomeroyi).